The following is a 407-amino-acid chain: Imidazolonepropionase (407 aa).

Positions 74 and 76 each coordinate Fe(3+). Zn(2+) contacts are provided by H74 and H76. 4-imidazolone-5-propanoate-binding residues include R83, Y146, and H179. Residue Y146 participates in N-formimidoyl-L-glutamate binding. Fe(3+) is bound at residue H244. A Zn(2+)-binding site is contributed by H244. Q247 provides a ligand contact to 4-imidazolone-5-propanoate. Position 319 (D319) interacts with Fe(3+). D319 provides a ligand contact to Zn(2+). 2 residues coordinate N-formimidoyl-L-glutamate: N321 and G323. 4-imidazolone-5-propanoate is bound at residue T324.

This sequence belongs to the metallo-dependent hydrolases superfamily. HutI family. It depends on Zn(2+) as a cofactor. The cofactor is Fe(3+).

Its subcellular location is the cytoplasm. It catalyses the reaction 4-imidazolone-5-propanoate + H2O = N-formimidoyl-L-glutamate. It functions in the pathway amino-acid degradation; L-histidine degradation into L-glutamate; N-formimidoyl-L-glutamate from L-histidine: step 3/3. Catalyzes the hydrolytic cleavage of the carbon-nitrogen bond in imidazolone-5-propanoate to yield N-formimidoyl-L-glutamate. It is the third step in the universal histidine degradation pathway. The protein is Imidazolonepropionase of Salmonella typhi.